The following is a 214-amino-acid chain: Adenylate kinase (214 aa).

ATP is bound at residue 10–15; that stretch reads GAGKGT. An NMP region spans residues 30–59; the sequence is STGDMLRAAVKAGTPLGLEAKKVMDAGQLV. AMP is bound by residues Thr31, Arg36, 57–59, 85–88, and Gln92; these read QLV and GFPR. An LID region spans residues 122–159; the sequence is GRRVHSGSGRVYHVVFNPPKVEGKDDVTGEDLSIRPDD. Residues Arg123 and 132–133 each bind ATP; that span reads VY. AMP contacts are provided by Arg156 and Arg167. Gln200 is a binding site for ATP.

The protein belongs to the adenylate kinase family. Monomer.

The protein localises to the cytoplasm. The catalysed reaction is AMP + ATP = 2 ADP. The protein operates within purine metabolism; AMP biosynthesis via salvage pathway; AMP from ADP: step 1/1. Functionally, catalyzes the reversible transfer of the terminal phosphate group between ATP and AMP. Plays an important role in cellular energy homeostasis and in adenine nucleotide metabolism. In Shewanella frigidimarina (strain NCIMB 400), this protein is Adenylate kinase.